We begin with the raw amino-acid sequence, 180 residues long: Large ribosomal subunit protein uL5 (180 aa).

It belongs to the universal ribosomal protein uL5 family. Part of the 50S ribosomal subunit; part of the 5S rRNA/L5/L18/L25 subcomplex. Contacts the 5S rRNA and the P site tRNA. Forms a bridge to the 30S subunit in the 70S ribosome.

Its function is as follows. This is one of the proteins that bind and probably mediate the attachment of the 5S RNA into the large ribosomal subunit, where it forms part of the central protuberance. In the 70S ribosome it contacts protein S13 of the 30S subunit (bridge B1b), connecting the 2 subunits; this bridge is implicated in subunit movement. Contacts the P site tRNA; the 5S rRNA and some of its associated proteins might help stabilize positioning of ribosome-bound tRNAs. The sequence is that of Large ribosomal subunit protein uL5 from Ralstonia nicotianae (strain ATCC BAA-1114 / GMI1000) (Ralstonia solanacearum).